The chain runs to 439 residues: MNLSQFEQFDLSPELLKALEKKGYSRPTAIQMEAIPAAMEESDVLGSAPTGTGKTAAFLLPALQHLLDYPRRKPGPPRILVLTPTRELAMQVAEQAEELAQFTHLNIATITGGVAYQNHGDVFNTNQDLVVATPGRLLQYIKEENFDCRSVEMLIFDEADRMLQMGFGQDAEKIAAETRWRKQTLLFSATLEGELLVDFAERLLNDPVKVDAEPSRRERKKINQWYYHADSNEHKIKLLARFIETEEVTRGIVFIRRREDARELSETLRKRGIRSAYLEGEMAQTQRNNAIDKLKSGIVTVLVATDVAARGIDIDDVSHVMNFDLPYSADTYLHRIGRTARAGKKGTAVSFVEAHDYKLLGKIKRYTEEILKARILAGLEPRTKPPKDGEVKSVSKKQKARIKEKREEKKKTEAKKKVKLRHKDTKNIGKRRKPSNSNV.

The Q motif motif lies at 4-32; that stretch reads SQFEQFDLSPELLKALEKKGYSRPTAIQM. The Helicase ATP-binding domain occupies 35–209; the sequence is IPAAMEESDV…AERLLNDPVK (175 aa). 48–55 serves as a coordination point for ATP; the sequence is APTGTGKT. Positions 157 to 160 match the DEAD box motif; it reads DEAD. One can recognise a Helicase C-terminal domain in the interval 237–387; sequence KLLARFIETE…GLEPRTKPPK (151 aa). Residues 381 to 393 are compositionally biased toward basic and acidic residues; sequence PRTKPPKDGEVKS. The interval 381–439 is disordered; that stretch reads PRTKPPKDGEVKSVSKKQKARIKEKREEKKKTEAKKKVKLRHKDTKNIGKRRKPSNSNV. Composition is skewed to basic residues over residues 394–403 and 412–439; these read VSKKQKARIK and TEAKKKVKLRHKDTKNIGKRRKPSNSNV.

This sequence belongs to the DEAD box helicase family. SrmB subfamily. In terms of assembly, interacts with the 50S ribosomal subunit.

It localises to the cytoplasm. The enzyme catalyses ATP + H2O = ADP + phosphate + H(+). Functionally, DEAD-box RNA helicase involved in the assembly of the 50S ribosomal subunit at low temperature. Exhibits RNA-stimulated ATP hydrolysis and RNA unwinding activity. This is ATP-dependent RNA helicase SrmB from Haemophilus influenzae (strain ATCC 51907 / DSM 11121 / KW20 / Rd).